Here is a 316-residue protein sequence, read N- to C-terminus: Protein lifeguard 2 (316 aa).

The tract at residues 1–53 is disordered; it reads MTQGKLSVANKAPGTEGQQQVHGEKKEAPAVPSAPPSYEEATSGEGMKAGAFP. A run of 3 helical transmembrane segments spans residues 106-126, 138-158, and 165-185; these read VYTILLIQLLVTLAVVALFTF, PGWYWASYAVFFATYLTLACC, and FPWNLILLTVFTLSMAYLTGM. The N-linked (GlcNAc...) asparagine glycan is linked to N191. 4 consecutive transmembrane segments (helical) span residues 194 to 214, 225 to 245, 250 to 270, and 290 to 310; these read SVLLCLGITALVCLSVTVFSF, GVLFVLPMTLFFSGLILAILL, VPWLHAVYAALGAGVFTLFLA, and IFGALNIYLDIIYIFTFFLQL.

Belongs to the BI1 family. LFG subfamily. As to quaternary structure, interacts with FAS/TNFRSF6 and BAX.

It localises to the cell membrane. The protein resides in the membrane raft. It is found in the postsynaptic cell membrane. Its function is as follows. Antiapoptotic protein which protects cells uniquely from Fas-induced apoptosis. Regulates Fas-mediated apoptosis in neurons by interfering with caspase-8 activation. Plays a role in cerebellar development by affecting cerebellar size, internal granular layer (IGL) thickness, and Purkinje cell (PC) development. This Pongo abelii (Sumatran orangutan) protein is Protein lifeguard 2 (FAIM2).